The sequence spans 177 residues: Phosphatidylglycerol/phosphatidylinositol transfer protein (177 aa).

The signal sequence occupies residues 1–17 (MRLSAAVIALLSTSAAA). Positions 18 to 30 (FSVYRENSVSAND) are excised as a propeptide.

It belongs to the NPC2 family. In terms of assembly, monomer.

Catalyzes the intermembrane transfer of phosphatidylglycerol and phosphatidylinositol. This is Phosphatidylglycerol/phosphatidylinositol transfer protein (npc-2) from Neurospora crassa (strain ATCC 24698 / 74-OR23-1A / CBS 708.71 / DSM 1257 / FGSC 987).